We begin with the raw amino-acid sequence, 359 residues long: Phospho-N-acetylmuramoyl-pentapeptide-transferase (359 aa).

10 helical membrane-spanning segments follow: residues 24–44 (FRAL…SPIF), 72–92 (FVPS…SILL), 100–120 (TWIM…DDFV), 134–154 (MLGQ…VMHI), 170–190 (LGYF…NAVN), 197–217 (GLAI…SYVA), 234–254 (AGEL…FLWF), 261–281 (MFMG…LAIM), 289–309 (IIAG…VSVF), and 336–356 (KIVV…IATL).

Belongs to the glycosyltransferase 4 family. MraY subfamily. Mg(2+) serves as cofactor.

Its subcellular location is the cell inner membrane. It catalyses the reaction UDP-N-acetyl-alpha-D-muramoyl-L-alanyl-gamma-D-glutamyl-meso-2,6-diaminopimeloyl-D-alanyl-D-alanine + di-trans,octa-cis-undecaprenyl phosphate = di-trans,octa-cis-undecaprenyl diphospho-N-acetyl-alpha-D-muramoyl-L-alanyl-D-glutamyl-meso-2,6-diaminopimeloyl-D-alanyl-D-alanine + UMP. It participates in cell wall biogenesis; peptidoglycan biosynthesis. Its function is as follows. Catalyzes the initial step of the lipid cycle reactions in the biosynthesis of the cell wall peptidoglycan: transfers peptidoglycan precursor phospho-MurNAc-pentapeptide from UDP-MurNAc-pentapeptide onto the lipid carrier undecaprenyl phosphate, yielding undecaprenyl-pyrophosphoryl-MurNAc-pentapeptide, known as lipid I. The sequence is that of Phospho-N-acetylmuramoyl-pentapeptide-transferase from Hydrogenobaculum sp. (strain Y04AAS1).